A 25-amino-acid chain; its full sequence is MRAKWKKKRMRRLKRKRRKMRQRSK.

The interval 1-25 is disordered; it reads MRAKWKKKRMRRLKRKRRKMRQRSK.

It belongs to the eukaryotic ribosomal protein eS32 family. As to quaternary structure, component of the small ribosomal subunit (SSU).

The protein is Small ribosomal subunit protein eS32 eS32z/eS32y/eS32x/eS32w/eS32v (RPL41A) of Arabidopsis thaliana (Mouse-ear cress).